The sequence spans 282 residues: Probable septum site-determining protein MinC (282 aa).

The disordered stretch occupies residues 103–147 (SQSRRGGKDEAPKEKAGKPEATAASGQTDAEAAGNTGKGKDSEGA). The segment covering 104-120 (QSRRGGKDEAPKEKAGK) has biased composition (basic and acidic residues).

This sequence belongs to the MinC family. In terms of assembly, interacts with MinD and FtsZ.

Its function is as follows. Cell division inhibitor that blocks the formation of polar Z ring septums. Rapidly oscillates between the poles of the cell to destabilize FtsZ filaments that have formed before they mature into polar Z rings. Prevents FtsZ polymerization. This chain is Probable septum site-determining protein MinC, found in Cupriavidus metallidurans (strain ATCC 43123 / DSM 2839 / NBRC 102507 / CH34) (Ralstonia metallidurans).